A 488-amino-acid chain; its full sequence is Regulatory protein ViaA (488 aa).

Belongs to the ViaA family. Homodimer. Interacts with RavA.

It is found in the cytoplasm. Functionally, component of the RavA-ViaA chaperone complex, which may act on the membrane to optimize the function of some of the respiratory chains. ViaA stimulates the ATPase activity of RavA. The chain is Regulatory protein ViaA from Yersinia pseudotuberculosis serotype O:1b (strain IP 31758).